The primary structure comprises 490 residues: Cytochrome P450 71B28 (490 aa).

A helical membrane pass occupies residues 1 to 21 (MSVFLCFLCLLPLILIFLKNL). C440 serves as a coordination point for heme.

It belongs to the cytochrome P450 family. Requires heme as cofactor.

The protein localises to the membrane. In Arabidopsis thaliana (Mouse-ear cress), this protein is Cytochrome P450 71B28 (CYP71B28).